We begin with the raw amino-acid sequence, 624 residues long: Kelch-like ECH-associated protein 1 (624 aa).

C38 is subject to S-(2-succinyl)cysteine. Residues 77–149 (CDVTLQVKYE…AYTASISVGE (73 aa)) form the BTB domain. An N5-[4-(S-L-cysteinyl)-5-methyl-1H-imidazol-2-yl]-L-ornithine (Arg-Cys) (interchain with C-151 in KEAP1) cross-link involves residue R135. Residue C151 is modified to S-(2,3-dicarboxypropyl)cysteine; alternate. Position 151 is an S-(2-succinyl)cysteine; alternate (C151). An S-nitrosocysteine; alternate modification is found at C151. Residue C151 forms an N5-[4-(S-L-cysteinyl)-5-methyl-1H-imidazol-2-yl]-L-ornithine (Cys-Arg) (interchain with R-135 in KEAP1) linkage. The region spanning 184 to 286 (AIGIANFAEQ…TPRFLQTQLQ (103 aa)) is the BACK domain. Residue C241 is modified to S-(2-succinyl)cysteine. S-(2,3-dicarboxypropyl)cysteine occurs at positions 257 and 273. Residue C288 is modified to S-(2,3-dicarboxypropyl)cysteine; alternate. Residue C288 is modified to S-(2-succinyl)cysteine; alternate. C319 bears the S-(2-succinyl)cysteine mark. Kelch repeat units lie at residues 327 to 372 (LIYT…VVGG), 373 to 423 (LLYA…VIDG), 424 to 470 (HIYA…VLNR), 471 to 517 (LLYA…VLHN), 519 to 564 (IYAA…VHQG), and 565 to 611 (KIYV…VTME). S-cGMP-cysteine is present on C434. C613 bears the S-(2-succinyl)cysteine mark.

Belongs to the KEAP1 family. Component of the BCR(KEAP1) E3 ubiquitin ligase complex, at least composed of 2 molecules of CUL3, 2 molecules of KEAP1, and RBX1. Interacts with NFE2L2/NRF2; the interaction is direct. Forms a ternary complex with NFE2L2/NRF2 and PGAM5. Interacts with (phosphorylated) SQSTM1/p62; the interaction is direct and inactivates the BCR(KEAP1) complex by sequestering it in inclusion bodies, promoting its degradation. Interacts with NFE2L1. Interacts with BPTF and PTMA. Interacts with MAP1LC3B. Interacts indirectly with ENC1. Interacts with SESN1 and SESN2. Interacts with HSP90AA1 and HSP90AB1. Interacts with PGCKA1; this interaction prevents the ubiquitination of KEAP1 by TRIM25, thus protecting KEAP1 from degradation. Post-translationally, non-enzymatic covalent modifications of reactive cysteines by electrophile metabolites inactivate the BCR(KEAP1) complex. Accumulation of fumarate promotes the formation of cysteine S-succination (S-(2-succinyl)cysteine), leading to inactivate the BCR(KEAP1) complex and promote NFE2L2/NRF2 nuclear accumulation and activation. Nitric oxide-dependent 8-Nitro-cGMP formation promotes cysteine guanylation (S-cGMP-cysteine), leading to NFE2L2/NRF2 nuclear accumulation and activation. Itaconate, an anti-inflammatory metabolite generated in response to lipopolysaccharide, alkylates cysteines, activating NFE2L2/NRF2. Methylglyoxal, a reactive metabolite that accumulates when the glycolytic enzyme PGK1 is inhibited, promotes formation of a methylimidazole cross-link between proximal Cys-151 and Arg-135 on another KEAP1 molecule, resulting in an inactive dimer that inactivates the BCR(KEAP1) complex. In terms of processing, degraded via a proteasomal-independent process during selective autophagy: interaction with phosphorylated SQSTM1/p62 sequesters KEAP1 in inclusion bodies, leading to its degradation. Auto-ubiquitinated by the BCR(KEAP1) complex. Quinone-induced oxidative stress, but not sulforaphane, increases its ubiquitination. Ubiquitination and subsequent degradation is most pronounced following prolonged exposure of cells to oxidative stress, particularly in glutathione-deficient cells that are highly susceptible to oxidative stress. Deubiquitinated by USP25; leading to stabilization. Ubiquitinated by TRIM25; leading to degradation upon ER stress.

It localises to the cytoplasm. The protein localises to the nucleus. Its pathway is protein modification; protein ubiquitination. Its activity is regulated as follows. Ubiquitin ligase activity of the BCR(KEAP1) complex is inhibited by oxidative stress and electrophile metabolites such as sulforaphane. Electrophile metabolites react with reactive cysteine residues in KEAP1 and trigger non-enzymatic covalent modifications of these cysteine residues, leading to inactivate the ubiquitin ligase activity of the BCR(KEAP1) complex. Selective autophagy also inactivates the BCR(KEAP1) complex via interaction between KEAP1 and SQSTM1/p62, which sequesters the complex in inclusion bodies and promotes its degradation. Its function is as follows. Substrate-specific adapter of a BCR (BTB-CUL3-RBX1) E3 ubiquitin ligase complex that regulates the response to oxidative stress by targeting NFE2L2/NRF2 for ubiquitination. KEAP1 acts as a key sensor of oxidative and electrophilic stress: in normal conditions, the BCR(KEAP1) complex mediates ubiquitination and degradation of NFE2L2/NRF2, a transcription factor regulating expression of many cytoprotective genes. In response to oxidative stress, different electrophile metabolites trigger non-enzymatic covalent modifications of highly reactive cysteine residues in KEAP1, leading to inactivate the ubiquitin ligase activity of the BCR(KEAP1) complex, promoting NFE2L2/NRF2 nuclear accumulation and expression of phase II detoxifying enzymes. In response to selective autophagy, KEAP1 is sequestered in inclusion bodies following its interaction with SQSTM1/p62, leading to inactivation of the BCR(KEAP1) complex and activation of NFE2L2/NRF2. The BCR(KEAP1) complex also mediates ubiquitination of SQSTM1/p62, increasing SQSTM1/p62 sequestering activity and degradation. The BCR(KEAP1) complex also targets BPTF and PGAM5 for ubiquitination and degradation by the proteasome. This is Kelch-like ECH-associated protein 1 from Mus musculus (Mouse).